The sequence spans 119 residues: Protein TusC (119 aa).

This sequence belongs to the DsrF/TusC family. As to quaternary structure, heterohexamer, formed by a dimer of trimers. The hexameric TusBCD complex contains 2 copies each of TusB, TusC and TusD. The TusBCD complex interacts with TusE.

It is found in the cytoplasm. Part of a sulfur-relay system required for 2-thiolation of 5-methylaminomethyl-2-thiouridine (mnm(5)s(2)U) at tRNA wobble positions. This chain is Protein TusC, found in Shigella dysenteriae serotype 1 (strain Sd197).